A 119-amino-acid polypeptide reads, in one-letter code: MIARRNPEPLRFLPDEARSLPPPKLTDPRLLYLGFLGYCSGLIDNLIRRRPIATAGLHRQLLYITAFFFAGYYLVKRENYLYAVRDREMFGYMKLHPEEFPEEEKKTYGEIFEKFHPVH.

A helical transmembrane segment spans residues 56 to 75; that stretch reads GLHRQLLYITAFFFAGYYLV.

It belongs to the complex I NDUFC2 subunit family. Complex I is composed of 45 different subunits. Interacts with TMEM242.

The protein resides in the mitochondrion inner membrane. Its function is as follows. Accessory subunit of the mitochondrial membrane respiratory chain NADH dehydrogenase (Complex I), that is believed not to be involved in catalysis but required for the complex assembly. Complex I functions in the transfer of electrons from NADH to the respiratory chain. The immediate electron acceptor for the enzyme is believed to be ubiquinone. This chain is NADH dehydrogenase [ubiquinone] 1 subunit C2, found in Pongo pygmaeus (Bornean orangutan).